We begin with the raw amino-acid sequence, 403 residues long: Tryptophan synthase beta chain (403 aa).

At Lys93 the chain carries N6-(pyridoxal phosphate)lysine.

Belongs to the TrpB family. As to quaternary structure, tetramer of two alpha and two beta chains. Requires pyridoxal 5'-phosphate as cofactor.

It catalyses the reaction (1S,2R)-1-C-(indol-3-yl)glycerol 3-phosphate + L-serine = D-glyceraldehyde 3-phosphate + L-tryptophan + H2O. It functions in the pathway amino-acid biosynthesis; L-tryptophan biosynthesis; L-tryptophan from chorismate: step 5/5. Functionally, the beta subunit is responsible for the synthesis of L-tryptophan from indole and L-serine. The sequence is that of Tryptophan synthase beta chain from Acinetobacter baylyi (strain ATCC 33305 / BD413 / ADP1).